The following is a 123-amino-acid chain: Small ribosomal subunit protein uS12 (123 aa).

Aspartate 89 bears the 3-methylthioaspartic acid mark. Positions 103–123 are disordered; sequence DTSGVQDRRQGRSKYGAKRPK. Over residues 113–123 the composition is skewed to basic residues; the sequence is GRSKYGAKRPK.

It belongs to the universal ribosomal protein uS12 family. Part of the 30S ribosomal subunit. Contacts proteins S8 and S17. May interact with IF1 in the 30S initiation complex.

Functionally, with S4 and S5 plays an important role in translational accuracy. In terms of biological role, interacts with and stabilizes bases of the 16S rRNA that are involved in tRNA selection in the A site and with the mRNA backbone. Located at the interface of the 30S and 50S subunits, it traverses the body of the 30S subunit contacting proteins on the other side and probably holding the rRNA structure together. The combined cluster of proteins S8, S12 and S17 appears to hold together the shoulder and platform of the 30S subunit. In Nitratidesulfovibrio vulgaris (strain ATCC 29579 / DSM 644 / CCUG 34227 / NCIMB 8303 / VKM B-1760 / Hildenborough) (Desulfovibrio vulgaris), this protein is Small ribosomal subunit protein uS12.